Here is a 129-residue protein sequence, read N- to C-terminus: Small ribosomal subunit protein uS9 (129 aa).

Belongs to the universal ribosomal protein uS9 family.

The protein is Small ribosomal subunit protein uS9 of Helicobacter pylori (strain HPAG1).